Consider the following 263-residue polypeptide: uncharacterized protein (263 aa).

It is found in the mitochondrion. This is an uncharacterized protein from Schizosaccharomyces pombe (strain 972 / ATCC 24843) (Fission yeast).